Consider the following 201-residue polypeptide: Translation initiation factor IF-3 (201 aa).

The protein belongs to the IF-3 family. In terms of assembly, monomer.

It is found in the cytoplasm. IF-3 binds to the 30S ribosomal subunit and shifts the equilibrium between 70S ribosomes and their 50S and 30S subunits in favor of the free subunits, thus enhancing the availability of 30S subunits on which protein synthesis initiation begins. In Prochlorococcus marinus (strain SARG / CCMP1375 / SS120), this protein is Translation initiation factor IF-3.